A 974-amino-acid polypeptide reads, in one-letter code: Membrane-associated phosphatidylinositol transfer protein 3 (974 aa).

Phosphoserine is present on residues serine 30, serine 31, serine 109, serine 295, serine 298, serine 321, serine 343, and serine 495. The tract at residues 284–304 is disordered; sequence GDSPASSSRKGSISSTQDTPV. Residues 292–302 are compositionally biased toward polar residues; sequence RKGSISSTQDT. 2 disordered regions span residues 323–346 and 491–536; these read IDIS…SDSS and SSRD…SMAP. The region spanning 390 to 594 is the DDHD domain; sequence FDFDVSDFFL…VAFILRQVMR (205 aa). A compositionally biased stretch (low complexity) spans 520–533; that stretch reads EGSSHSESSESSDS. Phosphoserine is present on residues serine 612, serine 907, serine 928, and serine 946. A disordered region spans residues 927 to 974; sequence MSVQQPDPPAANPKPERAQSQPESDKDHERPLPALSWARGPPKFESVP.

This sequence belongs to the PtdIns transfer protein family. PI transfer class IIA subfamily. Interacts with PTK2B via its C-terminus. Detected in brain and spleen, and at low levels in ovary.

It localises to the endomembrane system. Its function is as follows. Catalyzes the transfer of phosphatidylinositol and phosphatidylcholine between membranes (in vitro). Binds calcium ions. This chain is Membrane-associated phosphatidylinositol transfer protein 3 (PITPNM3), found in Homo sapiens (Human).